The chain runs to 148 residues: NADPH-dependent 7-cyano-7-deazaguanine reductase (148 aa).

The active-site Thioimide intermediate is the cysteine 50. The Proton donor role is filled by aspartate 57. Residues valine 72–serine 74 and histidine 91–glutamate 92 contribute to the substrate site.

It belongs to the GTP cyclohydrolase I family. QueF type 1 subfamily.

The protein localises to the cytoplasm. It carries out the reaction 7-aminomethyl-7-carbaguanine + 2 NADP(+) = 7-cyano-7-deazaguanine + 2 NADPH + 3 H(+). It participates in tRNA modification; tRNA-queuosine biosynthesis. In terms of biological role, catalyzes the NADPH-dependent reduction of 7-cyano-7-deazaguanine (preQ0) to 7-aminomethyl-7-deazaguanine (preQ1). This Helicobacter pylori (strain G27) protein is NADPH-dependent 7-cyano-7-deazaguanine reductase.